A 167-amino-acid chain; its full sequence is uncharacterized protein (167 aa).

2 DED domains span residues 2–75 (DLKT…NLFQ) and 93–167 (THVL…AKTV).

This is an uncharacterized protein from Saimiriine herpesvirus 2 (strain 11) (SaHV-2).